Consider the following 478-residue polypeptide: Proline--tRNA ligase (478 aa).

This sequence belongs to the class-II aminoacyl-tRNA synthetase family. ProS type 3 subfamily. As to quaternary structure, homodimer.

The protein resides in the cytoplasm. The enzyme catalyses tRNA(Pro) + L-proline + ATP = L-prolyl-tRNA(Pro) + AMP + diphosphate. Its function is as follows. Catalyzes the attachment of proline to tRNA(Pro) in a two-step reaction: proline is first activated by ATP to form Pro-AMP and then transferred to the acceptor end of tRNA(Pro). The chain is Proline--tRNA ligase from Methanoregula boonei (strain DSM 21154 / JCM 14090 / 6A8).